Consider the following 239-residue polypeptide: Cysteine-rich venom protein 2 (239 aa).

The first 19 residues, 1 to 19, serve as a signal peptide directing secretion; the sequence is MIALIVLPILAAVLQQSSG. Positions 38 to 166 constitute an SCP domain; sequence VDLHNSLRRS…EYSYFYVCQY (129 aa). Disulfide bonds link Cys-75/Cys-153, Cys-92/Cys-167, Cys-148/Cys-164, Cys-186/Cys-193, Cys-189/Cys-198, Cys-202/Cys-234, and Cys-219/Cys-232. The ShKT domain occupies 198–234; the sequence is CTNPCPKKISTQLPRFGPQAGCQDKQMQSDCSATCFC.

The protein belongs to the CRISP family. Expressed by the venom gland.

The protein localises to the secreted. Its function is as follows. Weakly blocks contraction of smooth muscle elicited by high potassium-induced depolarization, but does not block caffeine-stimulated contraction. May target voltage-gated calcium channels on smooth muscle. The protein is Cysteine-rich venom protein 2 of Sistrurus catenatus edwardsii (Desert massasauga).